The sequence spans 441 residues: Amino-acid acetyltransferase (441 aa).

The N-acetyltransferase domain occupies glutamate 295 to serine 434.

Belongs to the acetyltransferase family. ArgA subfamily. As to quaternary structure, homohexamer.

It localises to the cytoplasm. The enzyme catalyses L-glutamate + acetyl-CoA = N-acetyl-L-glutamate + CoA + H(+). It participates in amino-acid biosynthesis; L-arginine biosynthesis; N(2)-acetyl-L-ornithine from L-glutamate: step 1/4. The polypeptide is Amino-acid acetyltransferase (Edwardsiella ictaluri (strain 93-146)).